A 365-amino-acid polypeptide reads, in one-letter code: Isopentenyl-diphosphate delta-isomerase (365 aa).

Residue 4 to 5 coordinates substrate; that stretch reads RK. FMN contacts are provided by residues 62–64, S92, and N121; that span reads GMT. 92–94 serves as a coordination point for substrate; sequence SQR. Q155 contributes to the substrate binding site. E156 is a binding site for Mg(2+). FMN is bound by residues K187, T216, 267–269, and 288–289; these read GVR and AL.

It belongs to the IPP isomerase type 2 family. In terms of assembly, homooctamer. Dimer of tetramers. Requires FMN as cofactor. The cofactor is NADPH. It depends on Mg(2+) as a cofactor.

The protein resides in the cytoplasm. It catalyses the reaction isopentenyl diphosphate = dimethylallyl diphosphate. Functionally, involved in the biosynthesis of isoprenoids. Catalyzes the 1,3-allylic rearrangement of the homoallylic substrate isopentenyl (IPP) to its allylic isomer, dimethylallyl diphosphate (DMAPP). This is Isopentenyl-diphosphate delta-isomerase from Methanopyrus kandleri (strain AV19 / DSM 6324 / JCM 9639 / NBRC 100938).